Reading from the N-terminus, the 54-residue chain is Phorbol-12-myristate-13-acetate-induced protein 1 (54 aa).

A BH3 motif is present at residues 29 to 37 (LRRFGDKLN). The interval 41 to 50 (KLLNLISKLF) is required for mitochondrial location.

Belongs to the PMAIP1 family. In terms of assembly, interacts with MCL1. Interacts with BCL2A1. Interacts with BAX. Interacts with BCL2L10. In terms of tissue distribution, highly expressed in adult T-cell leukemia cell line.

It is found in the mitochondrion. Functionally, promotes activation of caspases and apoptosis. Promotes mitochondrial membrane changes and efflux of apoptogenic proteins from the mitochondria. Contributes to p53/TP53-dependent apoptosis after radiation exposure. Promotes proteasomal degradation of MCL1. Competes with BAK1 for binding to MCL1 and can displace BAK1 from its binding site on MCL1. Competes with BIM/BCL2L11 for binding to MCL1 and can displace BIM/BCL2L11 from its binding site on MCL1. In Homo sapiens (Human), this protein is Phorbol-12-myristate-13-acetate-induced protein 1 (PMAIP1).